Consider the following 194-residue polypeptide: dCTP deaminase (194 aa).

DCTP contacts are provided by residues 110 to 115, Asp128, 136 to 138, Tyr171, Lys178, and Gln182; these read RSSLAR and VLE. The Proton donor/acceptor role is filled by Glu138. Residues 173-194 are disordered; the sequence is SRQDAKYKNQQSAVASRINQDR. Polar residues predominate over residues 180–194; sequence KNQQSAVASRINQDR.

Belongs to the dCTP deaminase family. Homotrimer.

It catalyses the reaction dCTP + H2O + H(+) = dUTP + NH4(+). It functions in the pathway pyrimidine metabolism; dUMP biosynthesis; dUMP from dCTP (dUTP route): step 1/2. Functionally, catalyzes the deamination of dCTP to dUTP. This is dCTP deaminase from Actinobacillus succinogenes (strain ATCC 55618 / DSM 22257 / CCUG 43843 / 130Z).